The chain runs to 258 residues: Deoxyribose-phosphate aldolase (258 aa).

Residue Asp102 is the Proton donor/acceptor of the active site. The active-site Schiff-base intermediate with acetaldehyde is the Lys165. The Proton donor/acceptor role is filled by Lys199.

The protein belongs to the DeoC/FbaB aldolase family. DeoC type 2 subfamily.

It localises to the cytoplasm. It catalyses the reaction 2-deoxy-D-ribose 5-phosphate = D-glyceraldehyde 3-phosphate + acetaldehyde. The protein operates within carbohydrate degradation; 2-deoxy-D-ribose 1-phosphate degradation; D-glyceraldehyde 3-phosphate and acetaldehyde from 2-deoxy-alpha-D-ribose 1-phosphate: step 2/2. Its function is as follows. Catalyzes a reversible aldol reaction between acetaldehyde and D-glyceraldehyde 3-phosphate to generate 2-deoxy-D-ribose 5-phosphate. This Aliivibrio fischeri (strain MJ11) (Vibrio fischeri) protein is Deoxyribose-phosphate aldolase.